A 158-amino-acid chain; its full sequence is Endoribonuclease YbeY (158 aa).

Residues H118, H122, and H128 each coordinate Zn(2+).

Belongs to the endoribonuclease YbeY family. Zn(2+) serves as cofactor.

Its subcellular location is the cytoplasm. Single strand-specific metallo-endoribonuclease involved in late-stage 70S ribosome quality control and in maturation of the 3' terminus of the 16S rRNA. This Bartonella quintana (strain Toulouse) (Rochalimaea quintana) protein is Endoribonuclease YbeY.